A 101-amino-acid chain; its full sequence is Small ribosomal subunit protein bS6 (101 aa).

Belongs to the bacterial ribosomal protein bS6 family.

Functionally, binds together with bS18 to 16S ribosomal RNA. This Nitratidesulfovibrio vulgaris (strain ATCC 29579 / DSM 644 / CCUG 34227 / NCIMB 8303 / VKM B-1760 / Hildenborough) (Desulfovibrio vulgaris) protein is Small ribosomal subunit protein bS6.